The chain runs to 137 residues: Small heat shock protein IbpA (137 aa).

The sHSP domain occupies 28–137 (SQSNGGYPPY…ANKPRRIEIN (110 aa)).

The protein belongs to the small heat shock protein (HSP20) family. Monomer. Forms homomultimers of about 100-150 subunits at optimal growth temperatures. Conformation changes to monomers at high temperatures or high ionic concentrations.

It is found in the cytoplasm. In terms of biological role, associates with aggregated proteins, together with IbpB, to stabilize and protect them from irreversible denaturation and extensive proteolysis during heat shock and oxidative stress. Aggregated proteins bound to the IbpAB complex are more efficiently refolded and reactivated by the ATP-dependent chaperone systems ClpB and DnaK/DnaJ/GrpE. Its activity is ATP-independent. The sequence is that of Small heat shock protein IbpA from Salmonella choleraesuis (strain SC-B67).